The sequence spans 118 residues: UPF0102 protein Dtur_1530 (118 aa).

This sequence belongs to the UPF0102 family.

This Dictyoglomus turgidum (strain DSM 6724 / Z-1310) protein is UPF0102 protein Dtur_1530.